An 85-amino-acid polypeptide reads, in one-letter code: MNYLVFFSLALLLMTGVGSVRDGYIADDKNCPYFCGRNAYCDDECKKNGAESGYCQWAGVYGNACWCYKLPDKVPIRVPGKCNGG.

The N-terminal stretch at 1 to 19 (MNYLVFFSLALLLMTGVGS) is a signal peptide. One can recognise an LCN-type CS-alpha/beta domain in the interval 21 to 83 (RDGYIADDKN…VPIRVPGKCN (63 aa)). 4 disulfide bridges follow: Cys31/Cys82, Cys35/Cys55, Cys41/Cys65, and Cys45/Cys67.

This sequence belongs to the long (4 C-C) scorpion toxin superfamily. Sodium channel inhibitor family. Alpha subfamily. As to expression, expressed by the venom gland.

It is found in the secreted. In terms of biological role, alpha toxins bind voltage-independently at site-3 of sodium channels (Nav) and inhibit the inactivation of the activated channels, thereby blocking neuronal transmission. The sequence is that of Toxin BmKa1 from Olivierus martensii (Manchurian scorpion).